Reading from the N-terminus, the 405-residue chain is S-adenosylmethionine:tRNA ribosyltransferase-isomerase (405 aa).

The protein belongs to the QueA family. In terms of assembly, monomer.

The protein resides in the cytoplasm. It catalyses the reaction 7-aminomethyl-7-carbaguanosine(34) in tRNA + S-adenosyl-L-methionine = epoxyqueuosine(34) in tRNA + adenine + L-methionine + 2 H(+). It participates in tRNA modification; tRNA-queuosine biosynthesis. Transfers and isomerizes the ribose moiety from AdoMet to the 7-aminomethyl group of 7-deazaguanine (preQ1-tRNA) to give epoxyqueuosine (oQ-tRNA). In Psychrobacter cryohalolentis (strain ATCC BAA-1226 / DSM 17306 / VKM B-2378 / K5), this protein is S-adenosylmethionine:tRNA ribosyltransferase-isomerase.